Reading from the N-terminus, the 596-residue chain is Arginine--tRNA ligase (596 aa).

The short motif at 128 to 138 (ANPTSSLHVGH) is the 'HIGH' region element.

It belongs to the class-I aminoacyl-tRNA synthetase family. As to quaternary structure, monomer.

It is found in the cytoplasm. The enzyme catalyses tRNA(Arg) + L-arginine + ATP = L-arginyl-tRNA(Arg) + AMP + diphosphate. The sequence is that of Arginine--tRNA ligase from Acinetobacter baumannii (strain SDF).